We begin with the raw amino-acid sequence, 269 residues long: Tryptophan synthase alpha chain (269 aa).

Residues E49 and D60 each act as proton acceptor in the active site.

It belongs to the TrpA family. Tetramer of two alpha and two beta chains.

The enzyme catalyses (1S,2R)-1-C-(indol-3-yl)glycerol 3-phosphate + L-serine = D-glyceraldehyde 3-phosphate + L-tryptophan + H2O. It functions in the pathway amino-acid biosynthesis; L-tryptophan biosynthesis; L-tryptophan from chorismate: step 5/5. Functionally, the alpha subunit is responsible for the aldol cleavage of indoleglycerol phosphate to indole and glyceraldehyde 3-phosphate. This is Tryptophan synthase alpha chain from Acidovorax ebreus (strain TPSY) (Diaphorobacter sp. (strain TPSY)).